We begin with the raw amino-acid sequence, 135 residues long: Small ribosomal subunit protein uS12 (135 aa).

The residue at position 89 (Asp89) is a 3-methylthioaspartic acid. The tract at residues Arg114–Lys135 is disordered. The segment covering Ala124–Lys135 has biased composition (low complexity).

This sequence belongs to the universal ribosomal protein uS12 family. As to quaternary structure, part of the 30S ribosomal subunit. Contacts proteins S8 and S17. May interact with IF1 in the 30S initiation complex.

With S4 and S5 plays an important role in translational accuracy. Functionally, interacts with and stabilizes bases of the 16S rRNA that are involved in tRNA selection in the A site and with the mRNA backbone. Located at the interface of the 30S and 50S subunits, it traverses the body of the 30S subunit contacting proteins on the other side and probably holding the rRNA structure together. The combined cluster of proteins S8, S12 and S17 appears to hold together the shoulder and platform of the 30S subunit. This is Small ribosomal subunit protein uS12 from Amoebophilus asiaticus (strain 5a2).